The following is a 78-amino-acid chain: Putative membrane protein insertion efficiency factor (78 aa).

It belongs to the UPF0161 family.

The protein localises to the cell membrane. Functionally, could be involved in insertion of integral membrane proteins into the membrane. This chain is Putative membrane protein insertion efficiency factor, found in Bacillus anthracis (strain A0248).